The sequence spans 467 residues: tRNA dimethylallyltransferase (467 aa).

The transit peptide at 1 to 47 (MAAAAAARAVPVSSGFRGLRRTLPLVVILGATGTGKSTLALQLGQRL) directs the protein to the mitochondrion. Residue 32 to 37 (TGTGKS) coordinates dimethylallyl diphosphate. Interaction with substrate tRNA regions lie at residues 55–58 (DSMQ) and 183–187 (RKVAR). Positions 221–230 (FPNPCILWLH) are core aggregation region. The interaction with isopentenylpyrophosphate transferase stretch occupies residues 233–255 (QAVLDERLDKRVDDMLAAGLLEE). Interaction with substrate tRNA stretches follow at residues 281-283 (QSI) and 313-331 (ALKQ…WVKN). The segment at 395 to 425 (HMCDLCDRIIIGDREWAAHLKSKSHLHQLKK) adopts a Matrin-type zinc-finger fold. The segment at 432 to 467 (DAVSATGSQSNSPDCDPERIEGESSGQHNQELKASV) is disordered. A phosphoserine mark is found at serine 443 and serine 455.

This sequence belongs to the IPP transferase family.

It localises to the mitochondrion. The protein resides in the cytoplasm. It is found in the nucleus. It catalyses the reaction adenosine(37) in tRNA + dimethylallyl diphosphate = N(6)-dimethylallyladenosine(37) in tRNA + diphosphate. Its function is as follows. Catalyzes the transfer of a dimethylallyl group onto the adenine at position 37 of both cytosolic and mitochondrial tRNAs, leading to the formation of N6-(dimethylallyl)adenosine (i6A37). Mediates modification of a limited subset of tRNAs: tRNA(Ser)(AGA), tRNA(Ser)(CGA), tRNA(Ser)(UGA), as well as partial modification of the selenocysteine tRNA(Ser)(UCA). TRIT1 is therefore required for selenoprotein expression. This is tRNA dimethylallyltransferase (Trit1) from Mus musculus (Mouse).